Consider the following 401-residue polypeptide: 2-amino-3-carboxymuconate-6-semialdehyde decarboxylase (401 aa).

Zn(2+) contacts are provided by histidine 18 and histidine 20. Arginine 59 lines the substrate pocket. 2 residues coordinate Zn(2+): histidine 234 and aspartate 352.

The protein belongs to the metallo-dependent hydrolases superfamily. ACMSD family. Monomer.

The catalysed reaction is 2-amino-3-carboxymuconate 6-semialdehyde + H(+) = 2-aminomuconate 6-semialdehyde + CO2. Its pathway is secondary metabolite metabolism; quinolate metabolism. Its function is as follows. Converts alpha-amino-beta-carboxymuconate-epsilon-semialdehyde (ACMS) to alpha-aminomuconate semialdehyde (AMS). The polypeptide is 2-amino-3-carboxymuconate-6-semialdehyde decarboxylase (Caenorhabditis elegans).